Consider the following 116-residue polypeptide: Large ribosomal subunit protein bL19 (116 aa).

This sequence belongs to the bacterial ribosomal protein bL19 family.

Its function is as follows. This protein is located at the 30S-50S ribosomal subunit interface and may play a role in the structure and function of the aminoacyl-tRNA binding site. This is Large ribosomal subunit protein bL19 from Lactobacillus gasseri (strain ATCC 33323 / DSM 20243 / BCRC 14619 / CIP 102991 / JCM 1131 / KCTC 3163 / NCIMB 11718 / NCTC 13722 / AM63).